The sequence spans 300 residues: Probable endonuclease 4 (300 aa).

Residues H69, H110, E145, D179, H182, H214, D227, H229, and E259 each coordinate Zn(2+).

It belongs to the AP endonuclease 2 family. Requires Zn(2+) as cofactor.

The catalysed reaction is Endonucleolytic cleavage to 5'-phosphooligonucleotide end-products.. In terms of biological role, endonuclease IV plays a role in DNA repair. It cleaves phosphodiester bonds at apurinic or apyrimidinic (AP) sites, generating a 3'-hydroxyl group and a 5'-terminal sugar phosphate. This Lachnoclostridium phytofermentans (strain ATCC 700394 / DSM 18823 / ISDg) (Clostridium phytofermentans) protein is Probable endonuclease 4.